Consider the following 161-residue polypeptide: 2-C-methyl-D-erythritol 2,4-cyclodiphosphate synthase (161 aa).

A divalent metal cation contacts are provided by aspartate 9 and histidine 11. 4-CDP-2-C-methyl-D-erythritol 2-phosphate contacts are provided by residues 9 to 11 and 37 to 38; these read DFH and HS. Position 45 (histidine 45) interacts with a divalent metal cation. Residues 59–61, 64–68, 135–138, and arginine 145 each bind 4-CDP-2-C-methyl-D-erythritol 2-phosphate; these read DIG, FPDTD, and TTTE.

It belongs to the IspF family. Homotrimer. A divalent metal cation serves as cofactor.

The enzyme catalyses 4-CDP-2-C-methyl-D-erythritol 2-phosphate = 2-C-methyl-D-erythritol 2,4-cyclic diphosphate + CMP. It participates in isoprenoid biosynthesis; isopentenyl diphosphate biosynthesis via DXP pathway; isopentenyl diphosphate from 1-deoxy-D-xylulose 5-phosphate: step 4/6. Its function is as follows. Involved in the biosynthesis of isopentenyl diphosphate (IPP) and dimethylallyl diphosphate (DMAPP), two major building blocks of isoprenoid compounds. Catalyzes the conversion of 4-diphosphocytidyl-2-C-methyl-D-erythritol 2-phosphate (CDP-ME2P) to 2-C-methyl-D-erythritol 2,4-cyclodiphosphate (ME-CPP) with a corresponding release of cytidine 5-monophosphate (CMP). The protein is 2-C-methyl-D-erythritol 2,4-cyclodiphosphate synthase of Leptospira interrogans serogroup Icterohaemorrhagiae serovar Lai (strain 56601).